Consider the following 76-residue polypeptide: Senegalin (76 aa).

The first 22 residues, 1 to 22 (MLSLKKSMLLLFFLGMVSFSLA), serve as a signal peptide directing secretion. A propeptide spanning residues 23–55 (NKRSDGKRADEEGEDKRADEEGEDKRADEEGED) is cleaved from the precursor. A disordered region spans residues 24–54 (KRSDGKRADEEGEDKRADEEGEDKRADEEGE). Leu-75 bears the Leucine amide mark.

In terms of tissue distribution, expressed by the skin glands.

Its subcellular location is the secreted. Functionally, antimicrobial peptide with activity against the Gram-positive bacterium S.aureus NCTC 10788 (MIC=50 um) and the yeast C.albicans NCPF 1467 (MIC=150 uM). Ineffective against the Gram-negative bacterium E.coli NCTC 10418. Induces a dose-dependent contraction of rat urinary bladder smooth muscle (EC50=2.9 nM) and a dose-dependent relaxation of rat tail artery smooth muscle (EC50=37.7 nM). In Kassina senegalensis (Senegal running frog), this protein is Senegalin.